Reading from the N-terminus, the 430-residue chain is Adenylosuccinate synthetase (430 aa).

GTP is bound by residues 12–18 (GDEGKGK) and 40–42 (GHT). The active-site Proton acceptor is the Asp-13. Mg(2+) is bound by residues Asp-13 and Gly-40. Residues 13–16 (DEGK), 38–41 (NAGH), Thr-130, Arg-144, Gln-224, Thr-239, and Arg-303 each bind IMP. His-41 acts as the Proton donor in catalysis. 299-305 (VVTGRKR) serves as a coordination point for substrate. Residues Arg-305, 331 to 333 (KLD), and 413 to 415 (STS) contribute to the GTP site.

It belongs to the adenylosuccinate synthetase family. As to quaternary structure, homodimer. Mg(2+) serves as cofactor.

It is found in the cytoplasm. It carries out the reaction IMP + L-aspartate + GTP = N(6)-(1,2-dicarboxyethyl)-AMP + GDP + phosphate + 2 H(+). Its pathway is purine metabolism; AMP biosynthesis via de novo pathway; AMP from IMP: step 1/2. Functionally, plays an important role in the de novo pathway of purine nucleotide biosynthesis. Catalyzes the first committed step in the biosynthesis of AMP from IMP. This is Adenylosuccinate synthetase from Methylobacterium sp. (strain 4-46).